Here is a 204-residue protein sequence, read N- to C-terminus: Translation initiation factor 2 subunit beta (204 aa).

The 59-residue stretch at 146 to 204 folds into the TRAM domain; the sequence is NLEEGQVLDVEIQSLSKRGDGVVKMGRYIMYVSNAKPGQSVKIKISRISGSIVFTERAE.

It belongs to the eIF-2-beta/eIF-5 family. In terms of assembly, heterotrimer composed of an alpha, a beta and a gamma chain.

Its function is as follows. eIF-2 functions in the early steps of protein synthesis by forming a ternary complex with GTP and initiator tRNA. This is Translation initiation factor 2 subunit beta from Methanoregula boonei (strain DSM 21154 / JCM 14090 / 6A8).